The chain runs to 173 residues: Small ribosomal subunit protein mS25 (173 aa).

This sequence belongs to the mitochondrion-specific ribosomal protein mS25 family. Component of the mitochondrial ribosome small subunit (28S) which comprises a 12S rRNA and about 30 distinct proteins.

It localises to the mitochondrion. This Bos taurus (Bovine) protein is Small ribosomal subunit protein mS25 (MRPS25).